Reading from the N-terminus, the 367-residue chain is Phosphoribosylaminoimidazole-succinocarboxamide synthase (367 aa).

Belongs to the SAICAR synthetase family.

It catalyses the reaction 5-amino-1-(5-phospho-D-ribosyl)imidazole-4-carboxylate + L-aspartate + ATP = (2S)-2-[5-amino-1-(5-phospho-beta-D-ribosyl)imidazole-4-carboxamido]succinate + ADP + phosphate + 2 H(+). It functions in the pathway purine metabolism; IMP biosynthesis via de novo pathway; 5-amino-1-(5-phospho-D-ribosyl)imidazole-4-carboxamide from 5-amino-1-(5-phospho-D-ribosyl)imidazole-4-carboxylate: step 1/2. The chain is Phosphoribosylaminoimidazole-succinocarboxamide synthase from Vibrio campbellii (strain ATCC BAA-1116).